The following is an 847-amino-acid chain: Vacuolar membrane protease (847 aa).

The Cytoplasmic portion of the chain corresponds to 1–17 (MQFGKSLLKHVYTRTFK). The chain crosses the membrane as a helical span at residues 18 to 38 (SSLTCSIFAFTLLMIFFVLDW). Over 39–348 (KRMNVYPRLD…GSYWQINLNL (310 aa)) the chain is Vacuolar. Zn(2+) contacts are provided by His146 and Asp158. Residue Glu190 is the Proton acceptor of the active site. Position 191 (Glu191) interacts with Zn(2+). Asn208 is a glycosylation site (N-linked (GlcNAc...) asparagine). Zn(2+) is bound at residue Glu216. An N-linked (GlcNAc...) asparagine glycan is attached at Asn274. His291 is a binding site for Zn(2+). The chain crosses the membrane as a helical span at residues 349–369 (HLFLNVVFLIACPAILFMCLF). Residues 370–381 (RFPSLYAQLKKP) lie on the Cytoplasmic side of the membrane. Residues 382 to 402 (CYLICFTLSSLFVLIFDYVVV) form a helical membrane-spanning segment. At 403 to 415 (QSLTKLNPYVIHS) the chain is on the vacuolar side. The chain crosses the membrane as a helical span at residues 416 to 436 (SPDAVLAFFFLTNLLGLVYSF). Over 437 to 454 (RYVATHSRMSNEELSCIE) the chain is Cytoplasmic. A helical transmembrane segment spans residues 455–475 (IVLIWYVSMFWYISLLIATLT). Over 476–482 (SIVRGLG) the chain is Vacuolar. Residues 483-503 (SLYFVNFGFFCSFFCCILTLI) traverse the membrane as a helical segment. At 504-560 (RVRYFVDRMVTINRPANPEQMPLVQSTSGNAYGTSRYPQHRLKAVVSKSASVKLNDN) the chain is on the cytoplasmic side. The chain crosses the membrane as a helical span at residues 561 to 581 (LWSVLFFSCLVPLPLFTCYNL). Over 582-605 (LSEVFIPAVHQSLIDGPYSNTCYK) the chain is Vacuolar. The chain crosses the membrane as a helical span at residues 606 to 626 (FAVILVFMAIINSSPFVFRAL). The Cytoplasmic portion of the chain corresponds to 627–630 (SKKS). The helical transmembrane segment at 631–651 (SAILLMLWVSLLFNILRAEPF) threads the bilayer. The Vacuolar segment spans residues 652 to 847 (NEKAPIKFRV…LLKMSKTHVM (196 aa)). N-linked (GlcNAc...) asparagine glycans are attached at residues Asn726, Asn734, Asn800, and Asn834.

This sequence belongs to the peptidase M28 family. Zn(2+) is required as a cofactor.

The protein resides in the vacuole membrane. Its function is as follows. May be involved in vacuolar sorting and osmoregulation. The protein is Vacuolar membrane protease of Schizosaccharomyces japonicus (strain yFS275 / FY16936) (Fission yeast).